The chain runs to 492 residues: Probable proline dehydrogenase, mitochondrial (492 aa).

This sequence belongs to the proline oxidase family. The cofactor is FAD.

It is found in the mitochondrion. It carries out the reaction L-proline + a quinone = (S)-1-pyrroline-5-carboxylate + a quinol + H(+). Converts proline to delta-1-pyrroline-5-carboxylate. This is Probable proline dehydrogenase, mitochondrial from Schizosaccharomyces pombe (strain 972 / ATCC 24843) (Fission yeast).